A 658-amino-acid polypeptide reads, in one-letter code: Biosynthetic arginine decarboxylase (658 aa).

Lysine 127 carries the N6-(pyridoxal phosphate)lysine modification. Residue 307 to 317 (FDVGGGLGVDY) coordinates substrate.

This sequence belongs to the Orn/Lys/Arg decarboxylase class-II family. SpeA subfamily. Homotetramer. The cofactor is pyridoxal 5'-phosphate. Requires Mg(2+) as cofactor. Processed post-translationally to a 70 kDa mature form. Post-translationally, the N-terminus is blocked.

The protein localises to the periplasm. The catalysed reaction is L-arginine + H(+) = agmatine + CO2. It participates in amine and polyamine biosynthesis; agmatine biosynthesis; agmatine from L-arginine: step 1/1. Down-regulated by polyamine end products putrescine and spermidine. In terms of biological role, catalyzes the biosynthesis of agmatine from arginine. The polypeptide is Biosynthetic arginine decarboxylase (speA) (Escherichia coli (strain K12)).